The following is a 194-amino-acid chain: Thioredoxin O1, mitochondrial (194 aa).

The N-terminal 42 residues, 1–42, are a transit peptide targeting the mitochondrion; that stretch reads MKGNWSIVRKVLHRQFSTLRSSTPSSRLSTSIRPLVLAPNSI. A Phosphoserine modification is found at Ser-75. The Thioredoxin domain occupies 89–194; the sequence is VKSEEEFINA…LKNLMEQLYK (106 aa). Active-site nucleophile residues include Cys-118 and Cys-121. An intrachain disulfide couples Cys-118 to Cys-121.

It belongs to the thioredoxin family. Plant O-type subfamily.

The protein localises to the mitochondrion matrix. Thiol-disulfide oxidoreductase that may participate in various redox reactions. Possesses insulin disulfide bonds reducing activity. Reduced by thioredoxin reductases NTRA and NTRB. The chain is Thioredoxin O1, mitochondrial from Arabidopsis thaliana (Mouse-ear cress).